Reading from the N-terminus, the 63-residue chain is uncharacterized protein (63 aa).

The chain crosses the membrane as a helical span at residues Leu4–Ile24.

Its subcellular location is the membrane. This is an uncharacterized protein from Invertebrate iridescent virus 6 (IIV-6).